A 293-amino-acid chain; its full sequence is Elongation factor Ts (293 aa).

Residues 80–83 form an involved in Mg(2+) ion dislocation from EF-Tu region; it reads TDFV.

Belongs to the EF-Ts family.

It is found in the cytoplasm. Associates with the EF-Tu.GDP complex and induces the exchange of GDP to GTP. It remains bound to the aminoacyl-tRNA.EF-Tu.GTP complex up to the GTP hydrolysis stage on the ribosome. This Staphylococcus aureus (strain USA300) protein is Elongation factor Ts.